The primary structure comprises 96 residues: DNA-directed RNA polymerase subunit Rpo11 (96 aa).

Belongs to the archaeal Rpo11/eukaryotic RPB11/RPC19 RNA polymerase subunit family. In terms of assembly, part of the RNA polymerase complex.

Its subcellular location is the cytoplasm. The catalysed reaction is RNA(n) + a ribonucleoside 5'-triphosphate = RNA(n+1) + diphosphate. DNA-dependent RNA polymerase (RNAP) catalyzes the transcription of DNA into RNA using the four ribonucleoside triphosphates as substrates. The polypeptide is DNA-directed RNA polymerase subunit Rpo11 (Methanococcus maripaludis (strain C5 / ATCC BAA-1333)).